We begin with the raw amino-acid sequence, 428 residues long: MLLGSLFEQTEELFHSEGFPGPDHSNFPLSELQFPAEKLYEDWPVRGPMGLSEREDTDEFLQMMINPNEVYSTGPAAAESPESDSGFSDDPRPDTPPQSETSPPLPQPTPVYELVYDIGSLEERKSQSDMSSVISIQLAEDWNSAPLLIPESCIVNDLPPVCKSTPLPIRLTPADLIAVDALYPELHLTEEEKRLLSQEGVALPNNLPLTKAEERILKKVRRKIRNKQSAQDSRRRKKEYIDGLESRVAACSSQNQELHKKVVELEKHNISLITQLRKLQTLIKQTSNKAAQTSTCVLILLFSLALLVFPSYSPFRSRPSASQEDSYRPTGVISRNILNKGGFSEVADPQASDTLHRAQQREEGDPGRHVVPPANPNPEETEPVSNRARTTPEPDEQVLAEPEAAILGQKGEPPGSDNLSKTARADEM.

The tract at residues 1 to 68 (MLLGSLFEQT…EFLQMMINPN (68 aa)) is required for transcriptional activation. Over 1–294 (MLLGSLFEQT…QTSNKAAQTS (294 aa)) the chain is Cytoplasmic. Residues 71-111 (YSTGPAAAESPESDSGFSDDPRPDTPPQSETSPPLPQPTPV) are disordered. In terms of domain architecture, bZIP spans 216–279 (ILKKVRRKIR…ISLITQLRKL (64 aa)). The segment at 218 to 247 (KKVRRKIRNKQSAQDSRRRKKEYIDGLESR) is basic motif. The tract at residues 258-279 (LHKKVVELEKHNISLITQLRKL) is leucine-zipper. The helical; Signal-anchor for type II membrane protein transmembrane segment at 295–315 (TCVLILLFSLALLVFPSYSPF) threads the bilayer. The Lumenal segment spans residues 316 to 428 (RSRPSASQED…LSKTARADEM (113 aa)). The interval 339 to 428 (NKGGFSEVAD…LSKTARADEM (90 aa)) is disordered. Residues 354 to 368 (TLHRAQQREEGDPGR) are compositionally biased toward basic and acidic residues. Asparagine 418 carries N-linked (GlcNAc...) asparagine glycosylation.

The protein belongs to the bZIP family. ATF subfamily. Binds DNA as a dimer. In terms of processing, controlled by regulated intramembrane proteolysis (RIP). A fragment containing the cytoplasmic transcription factor domain is released by proteolysis. The cleavage seems to be performed sequentially by site-1 and site-2 proteases (PS1 and PS2).

The protein localises to the endoplasmic reticulum membrane. It localises to the nucleus. Transcriptional activator. The sequence is that of Cyclic AMP-responsive element-binding protein 3-like protein 4 (creb3l4) from Xenopus tropicalis (Western clawed frog).